Reading from the N-terminus, the 150-residue chain is L-alanine exporter AlaE (150 aa).

Transmembrane regions (helical) follow at residues 17-37 (FAMV…VSGM), 48-68 (LSIP…DYVL), 86-106 (LVAY…TVGA), and 111-131 (IITA…LYGY).

This sequence belongs to the AlaE exporter family.

The protein localises to the cell inner membrane. Exports L-alanine. In Vibrio cholerae serotype O1 (strain ATCC 39315 / El Tor Inaba N16961), this protein is L-alanine exporter AlaE.